A 121-amino-acid polypeptide reads, in one-letter code: Large ribosomal subunit protein bL20 (121 aa).

It belongs to the bacterial ribosomal protein bL20 family.

In terms of biological role, binds directly to 23S ribosomal RNA and is necessary for the in vitro assembly process of the 50S ribosomal subunit. It is not involved in the protein synthesizing functions of that subunit. This is Large ribosomal subunit protein bL20 from Polynucleobacter asymbioticus (strain DSM 18221 / CIP 109841 / QLW-P1DMWA-1) (Polynucleobacter necessarius subsp. asymbioticus).